The following is a 92-amino-acid chain: Defensin-like protein 226 (92 aa).

The first 27 residues, 1 to 27 (MKCGVLFMISCLLITFLVLSHVREVES), serve as a signal peptide directing secretion. Intrachain disulfides connect Cys33/Cys92, Cys43/Cys71, Cys51/Cys86, and Cys69/Cys88.

The protein belongs to the DEFL family.

It localises to the secreted. This is Defensin-like protein 226 (SCRL2) from Arabidopsis thaliana (Mouse-ear cress).